A 366-amino-acid polypeptide reads, in one-letter code: Aminomethyltransferase (366 aa).

The protein belongs to the GcvT family. As to quaternary structure, the glycine cleavage system is composed of four proteins: P, T, L and H.

The enzyme catalyses N(6)-[(R)-S(8)-aminomethyldihydrolipoyl]-L-lysyl-[protein] + (6S)-5,6,7,8-tetrahydrofolate = N(6)-[(R)-dihydrolipoyl]-L-lysyl-[protein] + (6R)-5,10-methylene-5,6,7,8-tetrahydrofolate + NH4(+). Its function is as follows. The glycine cleavage system catalyzes the degradation of glycine. This is Aminomethyltransferase from Bacillus cereus (strain ATCC 10987 / NRS 248).